A 205-amino-acid polypeptide reads, in one-letter code: Ribosomal RNA small subunit methyltransferase G (205 aa).

S-adenosyl-L-methionine is bound by residues glycine 73, leucine 78, 124 to 125 (VE), and arginine 138.

Belongs to the methyltransferase superfamily. RNA methyltransferase RsmG family.

The protein resides in the cytoplasm. It carries out the reaction guanosine(527) in 16S rRNA + S-adenosyl-L-methionine = N(7)-methylguanosine(527) in 16S rRNA + S-adenosyl-L-homocysteine. Functionally, specifically methylates the N7 position of guanine in position 527 of 16S rRNA. In Actinobacillus pleuropneumoniae serotype 5b (strain L20), this protein is Ribosomal RNA small subunit methyltransferase G.